An 88-amino-acid polypeptide reads, in one-letter code: Small ribosomal subunit protein uS17 (88 aa).

It belongs to the universal ribosomal protein uS17 family. As to quaternary structure, part of the 30S ribosomal subunit.

Functionally, one of the primary rRNA binding proteins, it binds specifically to the 5'-end of 16S ribosomal RNA. In Nitrosospira multiformis (strain ATCC 25196 / NCIMB 11849 / C 71), this protein is Small ribosomal subunit protein uS17.